A 415-amino-acid polypeptide reads, in one-letter code: Imidazolonepropionase (415 aa).

Fe(3+) is bound by residues His74 and His76. Zn(2+) is bound by residues His74 and His76. 4-imidazolone-5-propanoate is bound by residues Arg83, Tyr146, and His179. Residue Tyr146 participates in N-formimidoyl-L-glutamate binding. Residue His244 coordinates Fe(3+). His244 is a Zn(2+) binding site. Residue Gln247 coordinates 4-imidazolone-5-propanoate. Asp319 contributes to the Fe(3+) binding site. Residue Asp319 coordinates Zn(2+). Positions 321 and 323 each coordinate N-formimidoyl-L-glutamate. Residue Thr324 coordinates 4-imidazolone-5-propanoate.

It belongs to the metallo-dependent hydrolases superfamily. HutI family. Zn(2+) serves as cofactor. Requires Fe(3+) as cofactor.

Its subcellular location is the cytoplasm. The catalysed reaction is 4-imidazolone-5-propanoate + H2O = N-formimidoyl-L-glutamate. It functions in the pathway amino-acid degradation; L-histidine degradation into L-glutamate; N-formimidoyl-L-glutamate from L-histidine: step 3/3. Its function is as follows. Catalyzes the hydrolytic cleavage of the carbon-nitrogen bond in imidazolone-5-propanoate to yield N-formimidoyl-L-glutamate. It is the third step in the universal histidine degradation pathway. The sequence is that of Imidazolonepropionase from Cupriavidus metallidurans (strain ATCC 43123 / DSM 2839 / NBRC 102507 / CH34) (Ralstonia metallidurans).